Here is a 395-residue protein sequence, read N- to C-terminus: MVSAAGLSGDGKMRGVLLVLLGLLYSSTSCGVQKASVFYGPDPKEGLVSSMEFPWVVSLQDSQYTHLAFGCILSEFWVLSIASAIQNRKDIVVIVGISNMDPSKIAHTEYPVNTIIIHEDFDNNSMSNNIALLKTDTAMHFGNLVQSICFLGRMLHTPPVLQNCWVSGWNPTSATGNHMTMSVLRKIFVKDLDMCPLYKLQKTECGSHTKEETKTACLGDPGSPMMCQLQQFDLWVLRGVLNFGGETCPGLFLYTKVEDYSKWITSKAERAGPPLSSLHHWEKLISFSHHGPNATMTQKTYSDSELGHVGSYLQGQRRTITHSRLGNSSRDSLDVREKDVKESGRSPEASVQPLYYDYYGGEVGEGRIFAGQNRLYQPEEIILVSFVLVFFCSSI.

The signal sequence occupies residues 1-30; that stretch reads MVSAAGLSGDGKMRGVLLVLLGLLYSSTSC. Residues 37-269 enclose the Peptidase S1 domain; it reads VFYGPDPKEG…YSKWITSKAE (233 aa). An N-linked (GlcNAc...) asparagine glycan is attached at Asn-123. 3 disulfide bridges follow: Cys-164/Cys-227, Cys-195/Cys-205, and Cys-217/Cys-248. Residues 324-348 are disordered; the sequence is RLGNSSRDSLDVREKDVKESGRSPE. N-linked (GlcNAc...) asparagine glycosylation occurs at Asn-327. Basic and acidic residues predominate over residues 331–345; sequence DSLDVREKDVKESGR.

The protein belongs to the peptidase S1 family. Plasma kallikrein subfamily.

Its subcellular location is the secreted. This Homo sapiens (Human) protein is Inactive serine protease 54 (PRSS54).